Consider the following 158-residue polypeptide: Cyclic pyranopterin monophosphate synthase (158 aa).

Substrate is bound by residues 76–78 (MCH) and 114–115 (ME). Asp129 is a catalytic residue.

It belongs to the MoaC family. Homohexamer; trimer of dimers.

It catalyses the reaction (8S)-3',8-cyclo-7,8-dihydroguanosine 5'-triphosphate = cyclic pyranopterin phosphate + diphosphate. The protein operates within cofactor biosynthesis; molybdopterin biosynthesis. Its function is as follows. Catalyzes the conversion of (8S)-3',8-cyclo-7,8-dihydroguanosine 5'-triphosphate to cyclic pyranopterin monophosphate (cPMP). The sequence is that of Cyclic pyranopterin monophosphate synthase from Clostridium perfringens (strain SM101 / Type A).